The following is a 154-amino-acid chain: MTHDNKLQVEAIKCGTVIDHIPAQIGFKLLTLFKLTATDQRITIGLNLPSNELGRKDLIKIENTFLTEQQANQLAMYAPKATVNRIDNYEVVRKLTLSLPDHIDGVLTCPNGNCISRSEPVRSSFSVKSRGGEVHLKCRYCEKEFEHQVVLQAD.

Zn(2+)-binding residues include Cys109, Cys114, Cys138, and Cys141.

This sequence belongs to the PyrI family. As to quaternary structure, heterododecamer (2C3:3R2) of six catalytic PyrB chains organized as two trimers (C3), and six regulatory PyrI chains organized as three dimers (R2). The cofactor is Zn(2+).

Its function is as follows. Involved in allosteric regulation of aspartate carbamoyltransferase. This is Aspartate carbamoyltransferase regulatory chain (pyrI) from Serratia marcescens.